The chain runs to 1462 residues: Protein peg1 (1462 aa).

Disordered regions lie at residues 528-563 and 573-592; these read SFSKSQKEETSSNSSNSSGTRRLGLPQRATPASRER and FHSTSLPPSLPSGHSPSIAI. Low complexity-rich tracts occupy residues 538–552 and 574–589; these read SSNSSNSSGTRRLGL and HSTSLPPSLPSGHSPS. A Phosphoserine modification is found at Ser-599. Residues 838-928 form a disordered region; the sequence is SSTHQEHLSK…NCSEESLDDH (91 aa). Positions 847-866 are enriched in low complexity; sequence KNLPTLNTSSSSNSSQTDLL. The segment covering 870 to 896 has biased composition (basic and acidic residues); sequence GKGETKETEMQSPIESKEGLLSKDTHI. Position 1221 is a phosphoserine (Ser-1221). Positions 1342–1367 form a coiled coil; it reads TLIAEIADLQGLYEFTQQRLQSLNTE.

This sequence belongs to the CLASP family. As to quaternary structure, interacts with microtubules. Interacts with dhc1, mal3 and tea1.

The protein localises to the cytoplasm. The protein resides in the cytoskeleton. It is found in the spindle. It localises to the microtubule organizing center. Its subcellular location is the spindle pole body. Functionally, microtubule binding protein that regulates the stability of dynamic microtubules. Required for mitotic spindle formation. The polypeptide is Protein peg1 (peg1) (Schizosaccharomyces pombe (strain 972 / ATCC 24843) (Fission yeast)).